Consider the following 382-residue polypeptide: Nitric oxide reductase FlRd-NAD(+) reductase (382 aa).

It belongs to the FAD-dependent oxidoreductase family. FAD is required as a cofactor.

It is found in the cytoplasm. It carries out the reaction 2 reduced [nitric oxide reductase rubredoxin domain] + NAD(+) + H(+) = 2 oxidized [nitric oxide reductase rubredoxin domain] + NADH. It functions in the pathway nitrogen metabolism; nitric oxide reduction. Functionally, one of at least two accessory proteins for anaerobic nitric oxide (NO) reductase. Reduces the rubredoxin moiety of NO reductase. The chain is Nitric oxide reductase FlRd-NAD(+) reductase from Vibrio vulnificus (strain YJ016).